Consider the following 44-residue polypeptide: Conotoxin Rg11a (44 aa).

Cystine bridges form between Cys-1–Cys-15, Cys-8–Cys-22, Cys-14–Cys-30, and Cys-21–Cys-36.

Expressed by the venom duct.

The protein localises to the secreted. Functionally, neurotoxin. Elicits hypersensibility when injected intracranially in mice. May act via potassium channel currents. This chain is Conotoxin Rg11a, found in Conus regius (Crown cone).